The sequence spans 60 residues: Myrmicitoxin(1)-Pr4b (60 aa).

A signal peptide spans 1-23 (MKAIIFLFAVLTVVAIIIPIISG). Positions 24–33 (EPNAGPHAAS) are excised as a propeptide. Q59 is modified (glutamine amide).

Belongs to the formicidae venom clade 2 family. As to expression, expressed by the venom gland.

It is found in the secreted. In terms of biological role, toxin that causes a rapid and irreversible paralysis when intrathoracically injected into insects (blowflies). Does not cause spontaneous nocifensive behaviors by intraplantar injection in mice. The sequence is that of Myrmicitoxin(1)-Pr4b from Pogonomyrmex rugosus (Desert harvester ant).